Consider the following 67-residue polypeptide: Large ribosomal subunit protein bL35 (67 aa).

The span at 1–16 shows a compositional bias: basic residues; it reads MPKMKTKSSAKKRFRV. Residues 1 to 23 form a disordered region; sequence MPKMKTKSSAKKRFRVRPGGTVK.

Belongs to the bacterial ribosomal protein bL35 family.

In Variovorax paradoxus (strain S110), this protein is Large ribosomal subunit protein bL35.